A 410-amino-acid polypeptide reads, in one-letter code: Serine hydroxymethyltransferase (410 aa).

(6S)-5,6,7,8-tetrahydrofolate contacts are provided by residues leucine 119 and 123 to 125 (GHL). Lysine 228 carries the N6-(pyridoxal phosphate)lysine modification. Residue 351 to 353 (SPF) coordinates (6S)-5,6,7,8-tetrahydrofolate.

This sequence belongs to the SHMT family. Homodimer. Pyridoxal 5'-phosphate is required as a cofactor.

The protein resides in the cytoplasm. The enzyme catalyses (6R)-5,10-methylene-5,6,7,8-tetrahydrofolate + glycine + H2O = (6S)-5,6,7,8-tetrahydrofolate + L-serine. It functions in the pathway one-carbon metabolism; tetrahydrofolate interconversion. Its pathway is amino-acid biosynthesis; glycine biosynthesis; glycine from L-serine: step 1/1. Its function is as follows. Catalyzes the reversible interconversion of serine and glycine with tetrahydrofolate (THF) serving as the one-carbon carrier. This reaction serves as the major source of one-carbon groups required for the biosynthesis of purines, thymidylate, methionine, and other important biomolecules. Also exhibits THF-independent aldolase activity toward beta-hydroxyamino acids, producing glycine and aldehydes, via a retro-aldol mechanism. This Clostridium perfringens (strain 13 / Type A) protein is Serine hydroxymethyltransferase.